A 167-amino-acid polypeptide reads, in one-letter code: Protein-export protein SecB (167 aa).

The protein belongs to the SecB family. As to quaternary structure, homotetramer, a dimer of dimers. One homotetramer interacts with 1 SecA dimer.

It localises to the cytoplasm. One of the proteins required for the normal export of preproteins out of the cell cytoplasm. It is a molecular chaperone that binds to a subset of precursor proteins, maintaining them in a translocation-competent state. It also specifically binds to its receptor SecA. In Cellvibrio japonicus (strain Ueda107) (Pseudomonas fluorescens subsp. cellulosa), this protein is Protein-export protein SecB.